We begin with the raw amino-acid sequence, 372 residues long: 4-hydroxy-3-methylbut-2-en-1-yl diphosphate synthase (flavodoxin) (372 aa).

Positions 270, 273, 305, and 312 each coordinate [4Fe-4S] cluster.

This sequence belongs to the IspG family. [4Fe-4S] cluster is required as a cofactor.

The catalysed reaction is (2E)-4-hydroxy-3-methylbut-2-enyl diphosphate + oxidized [flavodoxin] + H2O + 2 H(+) = 2-C-methyl-D-erythritol 2,4-cyclic diphosphate + reduced [flavodoxin]. Its pathway is isoprenoid biosynthesis; isopentenyl diphosphate biosynthesis via DXP pathway; isopentenyl diphosphate from 1-deoxy-D-xylulose 5-phosphate: step 5/6. Its function is as follows. Converts 2C-methyl-D-erythritol 2,4-cyclodiphosphate (ME-2,4cPP) into 1-hydroxy-2-methyl-2-(E)-butenyl 4-diphosphate. This chain is 4-hydroxy-3-methylbut-2-en-1-yl diphosphate synthase (flavodoxin), found in Shigella boydii serotype 18 (strain CDC 3083-94 / BS512).